Consider the following 321-residue polypeptide: Glucokinase (321 aa).

Glycine 8 to threonine 13 provides a ligand contact to ATP.

The protein belongs to the bacterial glucokinase family.

The protein resides in the cytoplasm. The catalysed reaction is D-glucose + ATP = D-glucose 6-phosphate + ADP + H(+). The protein is Glucokinase of Shigella boydii serotype 18 (strain CDC 3083-94 / BS512).